The following is a 217-amino-acid chain: 3-demethoxyubiquinol 3-hydroxylase (217 aa).

Positions 66, 96, 99, 148, 180, and 183 each coordinate Fe cation.

It belongs to the COQ7 family. Fe cation is required as a cofactor.

It localises to the cell membrane. It carries out the reaction a 5-methoxy-2-methyl-3-(all-trans-polyprenyl)benzene-1,4-diol + AH2 + O2 = a 3-demethylubiquinol + A + H2O. The protein operates within cofactor biosynthesis; ubiquinone biosynthesis. Functionally, catalyzes the hydroxylation of 2-nonaprenyl-3-methyl-6-methoxy-1,4-benzoquinol during ubiquinone biosynthesis. The protein is 3-demethoxyubiquinol 3-hydroxylase of Xanthomonas euvesicatoria pv. vesicatoria (strain 85-10) (Xanthomonas campestris pv. vesicatoria).